We begin with the raw amino-acid sequence, 354 residues long: Ornithine transcarbamylase, mitochondrial (354 aa).

The N-terminal 32 residues, 1–32 (MLFNLRILLNNAAFRNGHNFMVRNFRCGQPLQ), are a transit peptide targeting the mitochondrion. The residue at position 70 (Lys-70) is an N6-acetyllysine; alternate. Residue Lys-70 is modified to N6-succinyllysine; alternate. At Lys-80 the chain carries N6-succinyllysine. N6-acetyllysine; alternate is present on Lys-88. An N6-succinyllysine; alternate modification is found at Lys-88. Position 90–93 (90–93 (STRT)) interacts with carbamoyl phosphate. Ser-133 is modified (phosphoserine). Position 141 (Arg-141) interacts with carbamoyl phosphate. Lys-144 is subject to N6-acetyllysine; alternate. Lys-144 carries the post-translational modification N6-succinyllysine; alternate. Carbamoyl phosphate contacts are provided by His-168 and Gln-171. L-ornithine is bound at residue Asn-199. Residues Lys-221, Lys-231, and Lys-238 each carry the N6-acetyllysine; alternate modification. An N6-succinyllysine; alternate mark is found at Lys-221, Lys-231, and Lys-238. N6-acetyllysine is present on Lys-243. 3 residues coordinate L-ornithine: Asp-263, Ser-267, and Met-268. 2 positions are modified to N6-succinyllysine: Lys-274 and Lys-289. At Lys-292 the chain carries N6-acetyllysine; alternate. Lys-292 carries the N6-succinyllysine; alternate modification. Cys-303 serves as the catalytic Proton acceptor. 303–304 (CL) is a carbamoyl phosphate binding site. Residue Lys-307 is modified to N6-acetyllysine; alternate. Position 307 is an N6-succinyllysine; alternate (Lys-307). Arg-330 serves as a coordination point for carbamoyl phosphate.

This sequence belongs to the aspartate/ornithine carbamoyltransferase superfamily. OTCase family. In terms of assembly, homotrimer. Post-translationally, acetylation at Lys-88 negatively regulates ornithine carbamoyltransferase activity in response to nutrient signals. In terms of tissue distribution, mainly expressed in liver and intestinal mucosa.

The protein localises to the mitochondrion matrix. The enzyme catalyses carbamoyl phosphate + L-ornithine = L-citrulline + phosphate + H(+). It functions in the pathway nitrogen metabolism; urea cycle; L-citrulline from L-ornithine and carbamoyl phosphate: step 1/1. Its activity is regulated as follows. Negatively regulated by lysine acetylation. In terms of biological role, catalyzes the second step of the urea cycle, the condensation of carbamoyl phosphate with L-ornithine to form L-citrulline. The urea cycle ensures the detoxification of ammonia by converting it to urea for excretion. The polypeptide is Ornithine transcarbamylase, mitochondrial (Homo sapiens (Human)).